Here is a 604-residue protein sequence, read N- to C-terminus: Glucose oxidase (604 aa).

The first 18 residues, 1–18, serve as a signal peptide directing secretion; it reads MKSTIITSILFSVATVQA. FAD contacts are provided by Leu52, Thr53, and Glu73. N-linked (GlcNAc...) asparagine glycosylation occurs at Asn111. Residues Ser125, Asn129, Gly130, and Ser132 each coordinate FAD. Residues Cys186 and Cys228 are joined by a disulfide bond. N-linked (GlcNAc...) asparagine glycosylation is present at Asn213. An FAD-binding site is contributed by Val272. N-linked (GlcNAc...) asparagine glycosylation is found at Asn278, Asn409, and Asn531. His537 serves as the catalytic Proton acceptor. O2-binding residues include Lys558 and Val559. Positions 570 and 582 each coordinate FAD.

It belongs to the GMC oxidoreductase family. Homodimer. Requires FAD as cofactor.

The protein resides in the secreted. Its subcellular location is the cell wall. The protein localises to the cytoplasm. It is found in the extracellular space. It localises to the extracellular matrix. It catalyses the reaction beta-D-glucose + O2 = D-glucono-1,5-lactone + H2O2. Functionally, glucose oxidase catalyzes the oxidation of beta-D-glucose to D-glucono-delta-lactone and hydrogen peroxide in the presence of molecular oxygen. The enzyme also catalyzes the reaction with D-xylose but at a much lower rate. Shows any activities against D-fructose, D-galactose and D-arabinose. The enzyme is cytotoxic for a series of bacteria, yeasts and filamentous fungi and acts primarily via the liberation of H(2)O(2), which is a harmful oxidative stress-generating agent. The protein is Glucose oxidase of Penicillium chrysogenum (Penicillium notatum).